The following is a 526-amino-acid chain: GMP synthase [glutamine-hydrolyzing] (526 aa).

A Glutamine amidotransferase type-1 domain is found at 9 to 207; the sequence is RILILNFGSQ…VLDICSCQGR (199 aa). Catalysis depends on Cys86, which acts as the Nucleophile. Residues His181 and Glu183 contribute to the active site. Residues 208–401 form the GMPS ATP-PPase domain; sequence WTPNNIKENI…LGLPFHMLYR (194 aa). 235-241 serves as a coordination point for ATP; that stretch reads SGGVDST.

Homodimer.

It catalyses the reaction XMP + L-glutamine + ATP + H2O = GMP + L-glutamate + AMP + diphosphate + 2 H(+). It participates in purine metabolism; GMP biosynthesis; GMP from XMP (L-Gln route): step 1/1. Catalyzes the synthesis of GMP from XMP. The polypeptide is GMP synthase [glutamine-hydrolyzing] (Baumannia cicadellinicola subsp. Homalodisca coagulata).